A 270-amino-acid chain; its full sequence is Glutamate racemase (270 aa).

Substrate contacts are provided by residues 14 to 15 and 46 to 47; these read DS and YG. Residue C77 is the Proton donor/acceptor of the active site. 78 to 79 lines the substrate pocket; the sequence is NT. The active-site Proton donor/acceptor is the C189. 190 to 191 serves as a coordination point for substrate; it reads TH.

The protein belongs to the aspartate/glutamate racemases family.

It catalyses the reaction L-glutamate = D-glutamate. It participates in cell wall biogenesis; peptidoglycan biosynthesis. Its function is as follows. Provides the (R)-glutamate required for cell wall biosynthesis. The protein is Glutamate racemase of Neisseria meningitidis serogroup A / serotype 4A (strain DSM 15465 / Z2491).